Here is a 318-residue protein sequence, read N- to C-terminus: Putative fimbrium tip subunit Fim1F (318 aa).

The N-terminal stretch at 1–24 (MRFNVVLFMLIVALLGGLSTCSSE) is a signal peptide. Positions 25 to 50 (VPIGFDTDELSFDMSLVLLTGDMQTK) are excised as a propeptide.

Belongs to the bacteroidetes fimbrillin superfamily. FimA/Mfa1 family. In terms of assembly, may be part of the fimbrial tip.

Its subcellular location is the fimbrium. Its function is as follows. Putative component of the fimbrium tip. Fimbriae are filamentous appendages on the cell surface that mediate cell adhesion and biofilm formation. In Parabacteroides distasonis (strain ATCC 8503 / DSM 20701 / CIP 104284 / JCM 5825 / NCTC 11152), this protein is Putative fimbrium tip subunit Fim1F.